Consider the following 179-residue polypeptide: Large ribosomal subunit protein uL6 (179 aa).

It belongs to the universal ribosomal protein uL6 family. As to quaternary structure, part of the 50S ribosomal subunit.

In terms of biological role, this protein binds to the 23S rRNA, and is important in its secondary structure. It is located near the subunit interface in the base of the L7/L12 stalk, and near the tRNA binding site of the peptidyltransferase center. In Mycobacterium leprae (strain Br4923), this protein is Large ribosomal subunit protein uL6.